The chain runs to 248 residues: Adenosylcobinamide-GDP ribazoletransferase (248 aa).

Helical transmembrane passes span glutamate 24–tryptophan 44, valine 70–serine 90, valine 106–leucine 126, isoleucine 134–alanine 154, isoleucine 168–leucine 188, glycine 189–isoleucine 209, and alanine 228–valine 248.

It belongs to the CobS family. Mg(2+) serves as cofactor.

Its subcellular location is the cell membrane. It carries out the reaction alpha-ribazole + adenosylcob(III)inamide-GDP = adenosylcob(III)alamin + GMP + H(+). The enzyme catalyses alpha-ribazole 5'-phosphate + adenosylcob(III)inamide-GDP = adenosylcob(III)alamin 5'-phosphate + GMP + H(+). It participates in cofactor biosynthesis; adenosylcobalamin biosynthesis; adenosylcobalamin from cob(II)yrinate a,c-diamide: step 7/7. Its function is as follows. Joins adenosylcobinamide-GDP and alpha-ribazole to generate adenosylcobalamin (Ado-cobalamin). Also synthesizes adenosylcobalamin 5'-phosphate from adenosylcobinamide-GDP and alpha-ribazole 5'-phosphate. The chain is Adenosylcobinamide-GDP ribazoletransferase from Listeria monocytogenes serovar 1/2a (strain ATCC BAA-679 / EGD-e).